We begin with the raw amino-acid sequence, 248 residues long: 2,3-bisphosphoglycerate-dependent phosphoglycerate mutase (248 aa).

Residues 8 to 15, 21 to 22, Arg-60, 87 to 90, Lys-98, 114 to 115, and 183 to 184 contribute to the substrate site; these read RHGESTWN, TG, ERHY, RR, and GN. His-9 functions as the Tele-phosphohistidine intermediate in the catalytic mechanism. The active-site Proton donor/acceptor is Glu-87.

This sequence belongs to the phosphoglycerate mutase family. BPG-dependent PGAM subfamily. As to quaternary structure, homodimer.

It carries out the reaction (2R)-2-phosphoglycerate = (2R)-3-phosphoglycerate. It functions in the pathway carbohydrate degradation; glycolysis; pyruvate from D-glyceraldehyde 3-phosphate: step 3/5. In terms of biological role, catalyzes the interconversion of 2-phosphoglycerate and 3-phosphoglycerate. This Burkholderia lata (strain ATCC 17760 / DSM 23089 / LMG 22485 / NCIMB 9086 / R18194 / 383) protein is 2,3-bisphosphoglycerate-dependent phosphoglycerate mutase.